The sequence spans 355 residues: Vacuolar protein sorting-associated protein 37C (355 aa).

Ser29 is modified (phosphoserine). Positions 78-167 constitute a VPS37 C-terminal domain; the sequence is VERCQEQKAK…RKPRASQELA (90 aa). The interval 159–355 is disordered; the sequence is KPRASQELAG…PPPGPAWPGY (197 aa). Composition is skewed to pro residues over residues 170 to 186 and 194 to 214; these read APPPRPPPPVRPVPQGT and PQPPLAMPPYPLPYSPSPSLP. Residues 291-304 show a composition bias toward low complexity; sequence APSPGYPQQSPYPA. The span at 321–355 shows a compositional bias: pro residues; that stretch reads PGQPQPSVPLQPPYPPGPAPPYGFPPPPGPAWPGY.

This sequence belongs to the VPS37 family. As to quaternary structure, component of the ESCRT-I complex (endosomal sorting complex required for transport I) which consists of TSG101, VPS28, a VPS37 protein (VPS37A to -D) and MVB12A or MVB12B in a 1:1:1:1 stoichiometry. Interacts with TSG101, VPS28, MVB12A and MVB12B. Component of the ESCRT-I complex (endosomal sorting complex required for transport I) which consists of TSG101, VPS28, a VPS37 protein (VPS37A to -D) and UBAP1 in a 1:1:1:1 stoichiometry. Interacts with HGS and STAM2. Interacts with CEP55. In terms of processing, phosphorylated by TBK1.

It localises to the late endosome membrane. In terms of biological role, component of the ESCRT-I complex, a regulator of vesicular trafficking process. Required for the sorting of endocytic ubiquitinated cargos into multivesicular bodies. May be involved in cell growth and differentiation. This chain is Vacuolar protein sorting-associated protein 37C (VPS37C), found in Homo sapiens (Human).